We begin with the raw amino-acid sequence, 311 residues long: Heparan sulfate glucosamine 3-O-sulfotransferase 1 (311 aa).

The signal sequence occupies residues 1 to 20; that stretch reads MTLLLLGAVLLVAQPQLVHS. N-linked (GlcNAc...) asparagine glycosylation is present at N52. 3'-phosphoadenylyl sulfate contacts are provided by residues 68 to 72, R151, and S159; that span reads KGGTR. Residues N196, N246, and N253 are each glycosylated (N-linked (GlcNAc...) asparagine). Y259 contacts 3'-phosphoadenylyl sulfate. Residues C260 and C269 are joined by a disulfide bond. Residue 274-278 participates in 3'-phosphoadenylyl sulfate binding; the sequence is KGRAH.

It belongs to the sulfotransferase 1 family.

It is found in the golgi apparatus lumen. It carries out the reaction alpha-D-glucosaminyl-[heparan sulfate](n) + 3'-phosphoadenylyl sulfate = 3-sulfo-alpha-D-glucosaminyl-[heparan sulfate](n) + adenosine 3',5'-bisphosphate + H(+). Sulfotransferase that utilizes 3'-phospho-5'-adenylyl sulfate (PAPS) to catalyze the transfer of a sulfo group to position 3 of glucosamine residues in heparan. Catalyzes the rate limiting step in the biosynthesis of heparan sulfate (HSact). This modification is a crucial step in the biosynthesis of anticoagulant heparan sulfate as it completes the structure of the antithrombin pentasaccharide binding site. This Mus musculus (Mouse) protein is Heparan sulfate glucosamine 3-O-sulfotransferase 1 (Hs3st1).